A 352-amino-acid polypeptide reads, in one-letter code: Vacuolar protein sorting-associated protein 37C (352 aa).

Phosphoserine is present on Ser-29. In terms of domain architecture, VPS37 C-terminal spans 78-167 (VERCQEQKAK…RRPRALPELA (90 aa)). The disordered stretch occupies residues 162-352 (ALPELAGDVP…HPPGPAWPRY (191 aa)). Pro residues-rich tracts occupy residues 173–185 (KRPP…PQAT), 202–213 (YPLPYSPSPGLP), and 319–336 (PGQP…PPGT).

The protein belongs to the VPS37 family. Component of the ESCRT-I complex (endosomal sorting complex required for transport I) which consists of TSG101, VPS28, a VPS37 protein (VPS37A to -D) and MVB12A or MVB12B in a 1:1:1:1 stoichiometry. Interacts with TSG101, VPS28, MVB12A and MVB12B. Component of the ESCRT-I complex (endosomal sorting complex required for transport I) which consists of TSG101, VPS28, a VPS37 protein (VPS37A to -D) and UBAP1 in a 1:1:1:1 stoichiometry. Interacts with HGS and STAM2. Interacts with CEP55. In terms of processing, phosphorylated by TBK1.

Its subcellular location is the late endosome membrane. Component of the ESCRT-I complex, a regulator of vesicular trafficking process. Required for the sorting of endocytic ubiquitinated cargos into multivesicular bodies. May be involved in cell growth and differentiation. This chain is Vacuolar protein sorting-associated protein 37C (Vps37c), found in Mus musculus (Mouse).